The primary structure comprises 710 residues: Ribonuclease R (710 aa).

In terms of domain architecture, RNB spans 246-573 (RKDLRDKVIV…VHRLLKLYLE (328 aa)). In terms of domain architecture, S1 motif spans 625–705 (GEVFNVVVTN…IRGEIDFVLV (81 aa)).

It belongs to the RNR ribonuclease family. RNase R subfamily.

The protein localises to the cytoplasm. The enzyme catalyses Exonucleolytic cleavage in the 3'- to 5'-direction to yield nucleoside 5'-phosphates.. Functionally, 3'-5' exoribonuclease that releases 5'-nucleoside monophosphates and is involved in maturation of structured RNAs. This chain is Ribonuclease R, found in Thermotoga maritima (strain ATCC 43589 / DSM 3109 / JCM 10099 / NBRC 100826 / MSB8).